The following is a 79-amino-acid chain: D-alanyl carrier protein (79 aa).

A Carrier domain is found at 1–77 (MTVEEKIIDA…KIVEGVKELQ (77 aa)). At S35 the chain carries O-(pantetheine 4'-phosphoryl)serine.

The protein belongs to the DltC family. Post-translationally, 4'-phosphopantetheine is transferred from CoA to a specific serine of apo-DCP.

It localises to the cytoplasm. Its pathway is cell wall biogenesis; lipoteichoic acid biosynthesis. In terms of biological role, carrier protein involved in the D-alanylation of lipoteichoic acid (LTA). The loading of thioester-linked D-alanine onto DltC is catalyzed by D-alanine--D-alanyl carrier protein ligase DltA. The DltC-carried D-alanyl group is further transferred to cell membrane phosphatidylglycerol (PG) by forming an ester bond, probably catalyzed by DltD. D-alanylation of LTA plays an important role in modulating the properties of the cell wall in Gram-positive bacteria, influencing the net charge of the cell wall. The sequence is that of D-alanyl carrier protein from Streptococcus uberis (strain ATCC BAA-854 / 0140J).